We begin with the raw amino-acid sequence, 304 residues long: MNLEILQKKKEECRTWKNVEPWFLQLKEACKIEKSNLKIDYGDWFSIGNRADLGDEEYEIIVQTAKKLIPWRKGPFKIFDLEIDSEWQSNIKYNLIRPYFNLKDKVVADIGCNNGYYMFRMLEDCPKRLIGFDPSPLTLHQFEFVNHFVKSDIVYEMLGVEHLEFYNHKFDFIFMLGVLYHRPDPVGTLKSLARGLNSKGEILIDTFMIDGEEEICLTPNKRYSKIPNIYFIPTIPALKNWLERAGFENIEVLATTITTSQEQRKTPWSFDESLEDFLDPNDSSKTVEGYPAPKRVYVKARKIM.

Residues lysine 73, tryptophan 87, lysine 92, glycine 111, 133–135 (DPS), 160–161 (VE), tyrosine 180, and arginine 295 each bind carboxy-S-adenosyl-L-methionine.

The protein belongs to the class I-like SAM-binding methyltransferase superfamily. CmoB family. In terms of assembly, homotetramer.

The catalysed reaction is carboxy-S-adenosyl-L-methionine + 5-hydroxyuridine(34) in tRNA = 5-carboxymethoxyuridine(34) in tRNA + S-adenosyl-L-homocysteine + H(+). Functionally, catalyzes carboxymethyl transfer from carboxy-S-adenosyl-L-methionine (Cx-SAM) to 5-hydroxyuridine (ho5U) to form 5-carboxymethoxyuridine (cmo5U) at position 34 in tRNAs. The polypeptide is tRNA U34 carboxymethyltransferase (Aliarcobacter butzleri (strain RM4018) (Arcobacter butzleri)).